We begin with the raw amino-acid sequence, 249 residues long: Phosphate import ATP-binding protein PstB (249 aa).

The ABC transporter domain occupies Ile4–Ile244. Gly36–Ser43 provides a ligand contact to ATP.

This sequence belongs to the ABC transporter superfamily. Phosphate importer (TC 3.A.1.7) family. As to quaternary structure, the complex is composed of two ATP-binding proteins (PstB), two transmembrane proteins (PstC and PstA) and a solute-binding protein (PstS).

The protein localises to the cell membrane. The catalysed reaction is phosphate(out) + ATP + H2O = ADP + 2 phosphate(in) + H(+). Its function is as follows. Part of the ABC transporter complex PstSACB involved in phosphate import. Responsible for energy coupling to the transport system. This is Phosphate import ATP-binding protein PstB from Clostridium acetobutylicum (strain ATCC 824 / DSM 792 / JCM 1419 / IAM 19013 / LMG 5710 / NBRC 13948 / NRRL B-527 / VKM B-1787 / 2291 / W).